We begin with the raw amino-acid sequence, 397 residues long: Trans-2-enoyl-CoA reductase [NADH] (397 aa).

NAD(+)-binding positions include 53 to 58, 79 to 80, 116 to 117, and 144 to 145; these read GCSNGY, FE, DA, and LA. A substrate-binding site is contributed by tyrosine 230. Tyrosine 240 acts as the Proton donor in catalysis. NAD(+) contacts are provided by residues lysine 249 and 276–278; that span reads LVT.

This sequence belongs to the TER reductase family. In terms of assembly, monomer.

It carries out the reaction a 2,3-saturated acyl-CoA + NAD(+) = a (2E)-enoyl-CoA + NADH + H(+). It participates in lipid metabolism; fatty acid biosynthesis. With respect to regulation, inhibited by lauroyl-CoA. In terms of biological role, involved in the fatty acid synthesis (FAS II). Catalyzes the reduction of the carbon-carbon double bond of crotonyl-CoA to yield butyryl-CoA. In vitro it can also use hexenoyl-CoA and dodecenoyl-CoA as substrates. The chain is Trans-2-enoyl-CoA reductase [NADH] from Treponema denticola (strain ATCC 35405 / DSM 14222 / CIP 103919 / JCM 8153 / KCTC 15104).